The following is a 515-amino-acid chain: 2-isopropylmalate synthase (515 aa).

Positions 5 to 267 (VIIFDTTLRD…DTRINTQEIH (263 aa)) constitute a Pyruvate carboxyltransferase domain. The Mn(2+) site is built by Asp-14, His-202, His-204, and Asn-238. The regulatory domain stretch occupies residues 392–515 (VLDKLSAHST…VADIKNHKHH (124 aa)).

This sequence belongs to the alpha-IPM synthase/homocitrate synthase family. LeuA type 1 subfamily. As to quaternary structure, homodimer. Mn(2+) serves as cofactor.

It localises to the cytoplasm. It catalyses the reaction 3-methyl-2-oxobutanoate + acetyl-CoA + H2O = (2S)-2-isopropylmalate + CoA + H(+). The protein operates within amino-acid biosynthesis; L-leucine biosynthesis; L-leucine from 3-methyl-2-oxobutanoate: step 1/4. Its function is as follows. Catalyzes the condensation of the acetyl group of acetyl-CoA with 3-methyl-2-oxobutanoate (2-ketoisovalerate) to form 3-carboxy-3-hydroxy-4-methylpentanoate (2-isopropylmalate). This chain is 2-isopropylmalate synthase, found in Haemophilus influenzae (strain PittEE).